The following is a 118-amino-acid chain: MNQKSILKIAAAACDDKRAEDILALDMEGISLVADYFLICHGNSDKQVQAIAREIKDQADENGIQVKKMEGFDEARWVLVDLGDVVVHVFHKDERSYYNLEKLWGDAPLADLDFGMNQ.

This sequence belongs to the Iojap/RsfS family. In terms of assembly, interacts with ribosomal protein uL14 (rplN).

The protein localises to the cytoplasm. Functions as a ribosomal silencing factor. Interacts with ribosomal protein uL14 (rplN), blocking formation of intersubunit bridge B8. Prevents association of the 30S and 50S ribosomal subunits and the formation of functional ribosomes, thus repressing translation. The chain is Ribosomal silencing factor RsfS from Bacillus subtilis (strain 168).